The following is a 1174-amino-acid chain: Probable pyruvate-flavodoxin oxidoreductase (1174 aa).

4Fe-4S ferredoxin-type domains are found at residues 680–709 (EIPI…AKVV) and 736–765 (YVLQ…NPEI). [4Fe-4S] cluster is bound by residues C689, C692, C695, C699, C745, C748, C751, C755, C819, C822, C847, and C1071.

The protein belongs to the pyruvate:ferredoxin/flavodoxin oxidoreductase family. The cofactor is [4Fe-4S] cluster.

It carries out the reaction oxidized [flavodoxin] + pyruvate + CoA + 2 H(+) = reduced [flavodoxin] + acetyl-CoA + CO2. Functionally, oxidoreductase required for the transfer of electrons from pyruvate to flavodoxin. The chain is Probable pyruvate-flavodoxin oxidoreductase (ydbK) from Escherichia coli (strain K12).